The chain runs to 429 residues: MPNIVVVGTQWGDEGKGKIVDLLSGYADYVVRFQGGNNAGHTMVVDGNEIISHLVPSGIIQNKVCFIGNGVVVDPLVLLEEIDYLDSRGIDVSPERIKISDRAHMIMPYHKSIDQARELKKGDAKIGTTGRGIGPCYEDKATRRGIRFADLLDEALFAEKVTTIMEEKNFYLKNYFKTDTLDPGAVIKEFMGLRDRLLPYISDVSVALNKGMDQGKQVLFEGAQGTHLDIEHGTYPFVTSSSTVAANAACGSGVGPGKLDHVMGIVKAYTTRVGSGPFPTELFDEIGDRLQKKGAEFGATTGRRRRCGWLDMVMLKNAARLNGLTGLVITKLDVLDGLEEIKICTGYEHKGKVYDAFPPAIKTLEECTPVYESHPGWTENISKIKDYEDFPENTKKYLDRIKELSGVDIKIVSVGPGREATIVLDNLFC.

GTP-binding positions include 12-18 (GDEGKGK) and 40-42 (GHT). D13 serves as the catalytic Proton acceptor. D13 and G40 together coordinate Mg(2+). IMP-binding positions include 13-16 (DEGK), 38-41 (NAGH), T129, R143, Q224, T239, and R303. H41 (proton donor) is an active-site residue. 299–305 (ATTGRRR) lines the substrate pocket. GTP contacts are provided by residues R305, 331 to 333 (KLD), and 413 to 415 (SVG).

Belongs to the adenylosuccinate synthetase family. As to quaternary structure, homodimer. Mg(2+) is required as a cofactor.

Its subcellular location is the cytoplasm. It carries out the reaction IMP + L-aspartate + GTP = N(6)-(1,2-dicarboxyethyl)-AMP + GDP + phosphate + 2 H(+). Its pathway is purine metabolism; AMP biosynthesis via de novo pathway; AMP from IMP: step 1/2. Its function is as follows. Plays an important role in the de novo pathway of purine nucleotide biosynthesis. Catalyzes the first committed step in the biosynthesis of AMP from IMP. This is Adenylosuccinate synthetase from Desulforapulum autotrophicum (strain ATCC 43914 / DSM 3382 / VKM B-1955 / HRM2) (Desulfobacterium autotrophicum).